The chain runs to 65 residues: Large ribosomal subunit protein uL29 (65 aa).

The protein belongs to the universal ribosomal protein uL29 family.

The sequence is that of Large ribosomal subunit protein uL29 from Acidovorax ebreus (strain TPSY) (Diaphorobacter sp. (strain TPSY)).